Consider the following 78-residue polypeptide: Large ribosomal subunit protein bL28 (78 aa).

The segment at M1 to T25 is disordered. Positions M13–T25 are enriched in basic residues.

Belongs to the bacterial ribosomal protein bL28 family.

The protein is Large ribosomal subunit protein bL28 of Nitrosomonas eutropha (strain DSM 101675 / C91 / Nm57).